The chain runs to 122 residues: Large ribosomal subunit protein uL14c (122 aa).

This sequence belongs to the universal ribosomal protein uL14 family. In terms of assembly, part of the 50S ribosomal subunit.

It localises to the plastid. The protein localises to the chloroplast. Binds to 23S rRNA. The polypeptide is Large ribosomal subunit protein uL14c (Dioscorea elephantipes (Elephant's foot yam)).